Consider the following 523-residue polypeptide: Translation initiation factor eIF2B subunit delta (523 aa).

The disordered stretch occupies residues 1-154 (MAAVAVAVRE…EHTQADDPTL (154 aa)). The residue at position 2 (Ala2) is an N-acetylalanine. A Phosphoserine modification is found at Ser12. Positions 31–40 (MTQEEKLQLR) are enriched in basic and acidic residues. The segment covering 41–51 (KEKKQQKKKRK) has biased composition (basic residues). Thr85 is modified (phosphothreonine). Residues 95–120 (TKAELRAERRAKQEAERALKQARKGE) show a composition bias toward basic and acidic residues. Ser129 is modified (phosphoserine). A may bind the chemical integrated stress response (ISR) inhibitor ISRIB region spans residues 170–179 (RKDYGSKVSL).

Belongs to the eIF-2B alpha/beta/delta subunits family. As to quaternary structure, component of the translation initiation factor 2B (eIF2B) complex which is a heterodecamer of two sets of five different subunits: alpha, beta, gamma, delta and epsilon. Subunits alpha, beta and delta comprise a regulatory subcomplex and subunits epsilon and gamma comprise a catalytic subcomplex. Within the complex, the hexameric regulatory complex resides at the center, with the two heterodimeric catalytic subcomplexes bound on opposite sides.

Its subcellular location is the cytoplasm. The protein resides in the cytosol. Activated by the chemical integrated stress response (ISR) inhibitor ISRIB which stimulates guanine nucleotide exchange factor activity for both phosphorylated and unphosphorylated eIF2. Acts as a component of the translation initiation factor 2B (eIF2B) complex, which catalyzes the exchange of GDP for GTP on eukaryotic initiation factor 2 (eIF2) gamma subunit. Its guanine nucleotide exchange factor activity is repressed when bound to eIF2 complex phosphorylated on the alpha subunit, thereby limiting the amount of methionyl-initiator methionine tRNA available to the ribosome and consequently global translation is repressed. This chain is Translation initiation factor eIF2B subunit delta (EIF2B4), found in Oryctolagus cuniculus (Rabbit).